A 115-amino-acid polypeptide reads, in one-letter code: Protein V2 (115 aa).

This sequence belongs to the geminiviridae protein AV2/V2 family. Interacts with host SGS3.

The protein resides in the host cytoplasm. It localises to the host perinuclear region. Through its interaction with host SGS3, acts as a suppressor of RNA-mediated gene silencing, also known as post-transcriptional gene silencing (PTGS), a mechanism of plant viral defense that limits the accumulation of viral RNAs. The chain is Protein V2 from Tomato yellow leaf curl Sardinia virus (isolate Spain-2) (TYLCSV).